The following is a 163-amino-acid chain: Putative pre-16S rRNA nuclease (163 aa).

Belongs to the YqgF nuclease family.

It localises to the cytoplasm. Its function is as follows. Could be a nuclease involved in processing of the 5'-end of pre-16S rRNA. This is Putative pre-16S rRNA nuclease from Roseobacter denitrificans (strain ATCC 33942 / OCh 114) (Erythrobacter sp. (strain OCh 114)).